Reading from the N-terminus, the 290-residue chain is Shikimate dehydrogenase (NADP(+)) (290 aa).

Residues 24-26 and T71 each bind shikimate; that span reads SLS. Residue K75 is the Proton acceptor of the active site. Residues N96 and D111 each contribute to the shikimate site. NADP(+)-binding positions include 136–140, 160–165, and L233; these read GAGGA and NRTVDR. Y235 is a shikimate binding site. G256 contributes to the NADP(+) binding site.

This sequence belongs to the shikimate dehydrogenase family. Homodimer.

The enzyme catalyses shikimate + NADP(+) = 3-dehydroshikimate + NADPH + H(+). It functions in the pathway metabolic intermediate biosynthesis; chorismate biosynthesis; chorismate from D-erythrose 4-phosphate and phosphoenolpyruvate: step 4/7. Its function is as follows. Involved in the biosynthesis of the chorismate, which leads to the biosynthesis of aromatic amino acids. Catalyzes the reversible NADPH linked reduction of 3-dehydroshikimate (DHSA) to yield shikimate (SA). The sequence is that of Shikimate dehydrogenase (NADP(+)) from Methanopyrus kandleri (strain AV19 / DSM 6324 / JCM 9639 / NBRC 100938).